A 315-amino-acid polypeptide reads, in one-letter code: DNA-directed RNA polymerase subunit alpha (315 aa).

The interval 1–228 (MLEIEKPKIE…EHLRLFVGLT (228 aa)) is alpha N-terminal domain (alpha-NTD). The alpha C-terminal domain (alpha-CTD) stretch occupies residues 245-315 (KNKLLEMPIE…LGLDLRHDEE (71 aa)).

The protein belongs to the RNA polymerase alpha chain family. Homodimer. The RNAP catalytic core consists of 2 alpha, 1 beta, 1 beta' and 1 omega subunit. When a sigma factor is associated with the core the holoenzyme is formed, which can initiate transcription.

The enzyme catalyses RNA(n) + a ribonucleoside 5'-triphosphate = RNA(n+1) + diphosphate. In terms of biological role, DNA-dependent RNA polymerase catalyzes the transcription of DNA into RNA using the four ribonucleoside triphosphates as substrates. In Desulforudis audaxviator (strain MP104C), this protein is DNA-directed RNA polymerase subunit alpha.